The primary structure comprises 356 residues: Dihydroorotate dehydrogenase (quinone) (356 aa).

FMN-binding positions include alanine 60–lysine 64 and serine 84. Residue lysine 64 participates in substrate binding. Position 109–113 (asparagine 109–phenylalanine 113) interacts with substrate. 2 residues coordinate FMN: asparagine 140 and asparagine 171. Residue asparagine 171 participates in substrate binding. The active-site Nucleophile is the serine 174. Position 176 (asparagine 176) interacts with substrate. The FMN site is built by lysine 216 and glycine 244. Asparagine 245–threonine 246 serves as a coordination point for substrate. Residues glycine 267, glycine 296, and tyrosine 317–serine 318 each bind FMN.

It belongs to the dihydroorotate dehydrogenase family. Type 2 subfamily. In terms of assembly, monomer. The cofactor is FMN.

It localises to the cell membrane. It carries out the reaction (S)-dihydroorotate + a quinone = orotate + a quinol. It functions in the pathway pyrimidine metabolism; UMP biosynthesis via de novo pathway; orotate from (S)-dihydroorotate (quinone route): step 1/1. Functionally, catalyzes the conversion of dihydroorotate to orotate with quinone as electron acceptor. This is Dihydroorotate dehydrogenase (quinone) from Azorhizobium caulinodans (strain ATCC 43989 / DSM 5975 / JCM 20966 / LMG 6465 / NBRC 14845 / NCIMB 13405 / ORS 571).